The primary structure comprises 348 residues: Chlorophyll(ide) b reductase NOL, chloroplastic (348 aa).

Residues 1-61 constitute a chloroplast transit peptide; the sequence is MATWSGFNVS…TRQNLTVTPS (61 aa). 84–108 provides a ligand contact to NAD(+); that stretch reads ITGSTKGIGYALAREFLKAGDNVVI. The Proton acceptor role is filled by Tyr-233.

The protein belongs to the short-chain dehydrogenases/reductases (SDR) family. Interacts with NCY1 to form a complex that acts as a chlorophyll b reductase. Interacts with HCAR, RCCR and the LHCII complex. Part of a SGR1-CCE-LHCII complex, which acts in chlorophyll breakdown.

Its subcellular location is the plastid. The protein localises to the chloroplast thylakoid membrane. It carries out the reaction 7(1)-hydroxychlorophyllide a + NAD(+) = chlorophyllide b + NADH + H(+). The enzyme catalyses 7(1)-hydroxychlorophyllide a + NADP(+) = chlorophyllide b + NADPH + H(+). Required for chlorophyll b degradation. Chlorophyll b, chlorophyllide b, pheophorbide b and pheophytin b can be used as substrates. Belongs to the chlorophyll catabolic enzymes (CCEs). The chain is Chlorophyll(ide) b reductase NOL, chloroplastic (NOL) from Arabidopsis thaliana (Mouse-ear cress).